A 224-amino-acid polypeptide reads, in one-letter code: ATP-dependent dethiobiotin synthetase BioD (224 aa).

13 to 18 (NVGKTI) provides a ligand contact to ATP. Residue Thr-17 participates in Mg(2+) binding. Lys-38 is an active-site residue. A substrate-binding site is contributed by Ser-42. ATP-binding positions include Asp-55, 116–119 (EGAG), 176–177 (NN), and Asn-211. Mg(2+)-binding residues include Asp-55 and Glu-116.

This sequence belongs to the dethiobiotin synthetase family. Homodimer. Mg(2+) serves as cofactor.

Its subcellular location is the cytoplasm. It carries out the reaction (7R,8S)-7,8-diammoniononanoate + CO2 + ATP = (4R,5S)-dethiobiotin + ADP + phosphate + 3 H(+). It functions in the pathway cofactor biosynthesis; biotin biosynthesis; biotin from 7,8-diaminononanoate: step 1/2. In terms of biological role, catalyzes a mechanistically unusual reaction, the ATP-dependent insertion of CO2 between the N7 and N8 nitrogen atoms of 7,8-diaminopelargonic acid (DAPA, also called 7,8-diammoniononanoate) to form a ureido ring. This Buchnera aphidicola subsp. Acyrthosiphon pisum (strain APS) (Acyrthosiphon pisum symbiotic bacterium) protein is ATP-dependent dethiobiotin synthetase BioD.